Consider the following 379-residue polypeptide: Putative beta-glucosidase 6 (379 aa).

The signal sequence occupies residues 1–20 (MEKTFALITIFLAFAFSGKC). A beta-D-glucoside contacts are provided by residues Gln-43, His-141, and 186–187 (NE). Glu-187 (proton donor) is an active-site residue. Cys-206 and Cys-213 are oxidised to a cystine. The N-linked (GlcNAc...) asparagine glycan is linked to Asn-217. An a beta-D-glucoside-binding site is contributed by Tyr-329. Asn-362 carries an N-linked (GlcNAc...) asparagine glycan.

It belongs to the glycosyl hydrolase 1 family.

The enzyme catalyses Hydrolysis of terminal, non-reducing beta-D-glucosyl residues with release of beta-D-glucose.. This Arabidopsis thaliana (Mouse-ear cress) protein is Putative beta-glucosidase 6.